The chain runs to 527 residues: (3S)-3-amino-3-(3-chloro-4-hydroxyphenyl)propanoyl-[peptidyl-carrier protein SgcC2] monooxygenase (527 aa).

Residues 1 to 10 show a composition bias toward basic and acidic residues; that stretch reads MPHGAEREAS. The disordered stretch occupies residues 1-22; the sequence is MPHGAEREASPAEESAGTRPLT. FAD contacts are provided by residues 161-163, 167-170, and threonine 202; these read HAF and PVDR.

This sequence belongs to the FADH(2)-utilizing monooxygenase family. As to quaternary structure, homotetramer.

The catalysed reaction is (3S)-3-amino-3-(3-chloro-4-hydroxyphenyl)propanoyl-[SgcC2 peptidyl-carrier protein] + FADH2 + O2 = (3S)-3-amino-3-(3-chloro-4,5-dihydroxyphenyl)propanoyl-[SgcC2 peptidyl-carrier protein] + FAD + H2O + H(+). The protein operates within antibiotic biosynthesis. The SgcE6-SgcC hydroxylation activity decreases in the presence of excess FAD. Its function is as follows. Oxygenase component of a two-component system involved in the biosynthesis of the enediyne antitumor antibiotic C-1027. Uses FADH(2) supplied by SgcE6 to catalyze the C-5 hydroxylation of (S)-3-chloro-beta-tyrosyl-S-SgcC2. Can also efficiently catalyze the regioselective hydroxylation of other 3-substituted beta-tyrosyl-S-SgcC2 analogs, including the bromo-, iodo-, fluoro-, and methyl-substituted analogs, but does not accept 3-hydroxy-beta-tyrosyl-S-SgcC2 as a substrate. Is only active with SgcC2 (peptidyl carrier protein)-tethered substrates. The polypeptide is (3S)-3-amino-3-(3-chloro-4-hydroxyphenyl)propanoyl-[peptidyl-carrier protein SgcC2] monooxygenase (Streptomyces globisporus).